A 193-amino-acid chain; its full sequence is Cbp/p300-interacting transactivator 1 (193 aa).

Disordered stretches follow at residues 1–26 (MPTT…NQEM), 50–88 (VASN…LHPA), and 106–147 (GMAA…SPAI). A compositionally biased stretch (low complexity) spans 54–73 (GTKASGAPTSSSGSPIGSPT). The Nuclear export signal signature appears at 158-167 (LMSLVVELGL).

It belongs to the CITED family. Interacts (via C-terminus) with CREBBP. Interacts with EGR2. Homodimer. Binds to RBM14. Interacts (via N-terminus) with HSPA8; the interaction suppresses the association of CITED1 with p300/CBP and SMAD-mediated transcription transactivation. Interacts (via C-terminus) with TOX3 (via HGM box); the interaction increases estrogen-response element (ERE)-dependent transcription and protection against cell death. Interacts with ESR1; the interaction occurs in a estrogen-dependent manner. Interacts (unphosphorylated form preferentially and via C-terminus) with EP300. Post-translationally, phosphorylated. Phosphorylation changes in a cell cycle-dependent manner and reduces its transcriptional coactivator activity. In terms of tissue distribution, expressed only in melanocytes and testis.

It is found in the nucleus. The protein resides in the cytoplasm. Transcriptional coactivator of the p300/CBP-mediated transcription complex. Enhances SMAD-mediated transcription by strengthening the functional link between the DNA-binding SMAD transcription factors and the p300/CBP transcription coactivator complex. Stimulates estrogen-dependent transactivation activity mediated by estrogen receptors signaling; stabilizes the interaction of estrogen receptor ESR1 and histone acetyltransferase EP300. Positively regulates TGF-beta signaling through its association with the SMAD/p300/CBP-mediated transcriptional coactivator complex. Induces transcription from estrogen-responsive promoters and protection against cell death. Potentiates EGR2-mediated transcriptional activation activity from the ERBB2 promoter. Acts as an inhibitor of osteoblastic mineralization through a cAMP-dependent parathyroid hormone receptor signaling. May play a role in pigmentation of melanocytes. Associates with chromatin to the estrogen-responsive TGF-alpha promoter region in a estrogen-dependent manner. This Homo sapiens (Human) protein is Cbp/p300-interacting transactivator 1 (CITED1).